We begin with the raw amino-acid sequence, 364 residues long: Chorismate synthase (364 aa).

Residue R47 coordinates NADP(+). FMN is bound by residues 124 to 126 (RGS), 240 to 241 (NA), G284, 299 to 303 (KPTPS), and R326.

It belongs to the chorismate synthase family. It depends on FMNH2 as a cofactor.

It catalyses the reaction 5-O-(1-carboxyvinyl)-3-phosphoshikimate = chorismate + phosphate. The protein operates within metabolic intermediate biosynthesis; chorismate biosynthesis; chorismate from D-erythrose 4-phosphate and phosphoenolpyruvate: step 7/7. Functionally, catalyzes the anti-1,4-elimination of the C-3 phosphate and the C-6 proR hydrogen from 5-enolpyruvylshikimate-3-phosphate (EPSP) to yield chorismate, which is the branch point compound that serves as the starting substrate for the three terminal pathways of aromatic amino acid biosynthesis. This reaction introduces a second double bond into the aromatic ring system. In Methanobrevibacter smithii (strain ATCC 35061 / DSM 861 / OCM 144 / PS), this protein is Chorismate synthase.